Reading from the N-terminus, the 216-residue chain is Transmembrane emp24 domain-containing protein eca (216 aa).

The N-terminal stretch at 1–20 is a signal peptide; that stretch reads MRDQFISLALMLCILHSACG. The Lumenal portion of the chain corresponds to 21-182; it reads LYFHISETER…FRHTSESTNS (162 aa). In terms of domain architecture, GOLD spans 30-126; sequence RKCFIEEVPD…QLRVHLDIQV (97 aa). A coiled-coil region spans residues 134 to 164; the sequence is ANVAQKEKLTELQLRIRQLLDQVEQITKEQN. Residues 183 to 203 traverse the membrane as a helical segment; it reads RVLWWSLAQTVVLVCMGFWQM. The Cytoplasmic segment spans residues 204–216; sequence RHLKSFFEAKKLV. A Prevents secretion from ER motif is present at residues 213 to 216; sequence KKLV.

The protein belongs to the EMP24/GP25L family.

The protein localises to the endoplasmic reticulum membrane. Its function is as follows. Eca and bai are essential, though not redundant, for dorsoventral patterning of the embryo. Specifically required during early embryogenesis for the activity of maternal tkv, while the zygotic tkv is not affected. Involved in Golgi organization. This Drosophila erecta (Fruit fly) protein is Transmembrane emp24 domain-containing protein eca.